The following is a 1117-amino-acid chain: Sodium-driven chloride bicarbonate exchanger (1117 aa).

Residues 1–14 (MQSGTCESFQSLSH) show a composition bias toward polar residues. 4 disordered regions span residues 1–26 (MQSG…VDRG), 57–94 (GRKS…FDTP), 244–312 (KQSE…PHQQ), and 456–475 (NGTA…GPEL). Topologically, residues 1-508 (MQSGTCESFQ…DFTDALSLQC (508 aa)) are cytoplasmic. Basic and acidic residues predominate over residues 15–26 (QRNDEEAVVDRG). Residues 58–75 (RKSHRRHRHRGHKHRKRD) are compositionally biased toward basic residues. Over residues 76–89 (RERDSGLEDGRESP) the composition is skewed to basic and acidic residues. Ser88 carries the phosphoserine modification. Thr93 is modified (phosphothreonine). The span at 247 to 263 (EPNSMDKNAGQVVSPQS) shows a compositional bias: polar residues. Ser275 carries the post-translational modification Phosphoserine. The chain crosses the membrane as a helical span at residues 509-529 (LASFLFLYCACMSPVITFGGL). At 530–537 (LGEATEGR) the chain is on the extracellular side. Residues 538–558 (ISAIESLFGASMTGIAYSLFG) form a helical membrane-spanning segment. The Cytoplasmic portion of the chain corresponds to 559 to 561 (GQP). Residues 562–582 (LTILGSTGPVLVFEKILFKFC) traverse the membrane as a helical segment. Topologically, residues 583 to 595 (KEYGLSYLSLRAS) are extracellular. A helical transmembrane segment spans residues 596-616 (IGLWTATLCIILVATDASSLV). Residues 617–625 (CYITRFTEE) lie on the Cytoplasmic side of the membrane. Residues 626–646 (AFASLICIIFIYEALEKLFEL) traverse the membrane as a helical segment. At 647 to 719 (SEAYPINMHN…VGRACGHEHP (73 aa)) the chain is on the extracellular side. N-linked (GlcNAc...) asparagine glycans are attached at residues Asn673, Asn676, Asn686, and Asn696. A helical membrane pass occupies residues 720-740 (YVPDVLFWSVILFFSTVTLSA). The Cytoplasmic segment spans residues 741–761 (TLKQFKTSRYFPTKVRSIVSD). A helical membrane pass occupies residues 762–782 (FAVFLTILCMVLIDYAIGIPS). At 783-808 (PKLQVPSVFKPTRDDRGWFVTPLGPN) the chain is on the extracellular side. The chain crosses the membrane as a helical span at residues 809 to 829 (PWWTVIAAIIPALLCTILIFM). Over 830-854 (DQQITAVIINRKEHKLKKGCGYHLD) the chain is Cytoplasmic. A helical transmembrane segment spans residues 855 to 875 (LLMVAVMLGVCSIMGLPWFVA). The Extracellular segment spans residues 876-911 (ATVLSITHVNSLKLESECSAPGEQPKFLGIREQRVT). Residues 912 to 932 (GLMIFILMGSSVFMTSILKFI) traverse the membrane as a helical segment. The Cytoplasmic portion of the chain corresponds to 933 to 934 (PM). A helical transmembrane segment spans residues 935–955 (PVLYGVFLYMGASSLKGIQFF). Over 956-997 (DRIKLFWMPAKHQPDFIYLRHVPLRKVHLFTVIQMSCLGLLW) the chain is Extracellular. Residues 998–1018 (IIKVSRAAIVFPMMVLALVFV) form a helical membrane-spanning segment. Residues 1019–1117 (RKLMDFLFTK…SSFPSKSSPS (99 aa)) lie on the Cytoplasmic side of the membrane. Phosphoserine occurs at positions 1056 and 1084.

It belongs to the anion exchanger (TC 2.A.31) family. In terms of processing, N-glycosylated.

The protein resides in the basolateral cell membrane. The protein localises to the apical cell membrane. It localises to the cell projection. Its subcellular location is the dendrite. It is found in the axon. The protein resides in the perikaryon. The protein localises to the presynapse. It localises to the postsynapse. Functionally, sodium/bicarbonate cotransporter which plays an important role in regulating intracellular pH. Has been shown to act as a sodium/bicarbonate cotransporter in exchange for intracellular chloride. Has also been shown to act as a sodium/biocarbonate cotransporter which does not couple net influx of bicarbonate to net efflux of chloride, with the observed chloride efflux being due to chloride self-exchange. Controls neuronal pH and may contribute to the secretion of cerebrospinal fluid. Acting on presynaptic intracellular pH, it promotes GABA release, reduces the excitability of CA1 pyramidal neurons, and modulates short-term synaptic plasticity. Required in retinal cells to maintain normal pH which is necessary for normal vision. In the kidney, likely to mediate bicarbonate reclamation in the apical membrane of the proximal tubules. The chain is Sodium-driven chloride bicarbonate exchanger from Bos taurus (Bovine).